We begin with the raw amino-acid sequence, 352 residues long: Pheromone-regulated membrane protein 6 (352 aa).

Residues 1–36 (MESSLQKLKFQDIDINLIPTAKWTTKLQYILYTWCQ) lie on the Extracellular side of the membrane. The helical transmembrane segment at 37–57 (SILHVAMFFSDIYTCIKLLAF) threads the bilayer. Residues 58-76 (NTWSNNIIQPFLEFRISKW) are Cytoplasmic-facing. A helical membrane pass occupies residues 77-97 (LFSGCILCSSLILIWELVIGL). Over 98 to 227 (RVYRKKEITS…VILSFMLFSF (130 aa)) the chain is Extracellular. A helical membrane pass occupies residues 228–248 (IIWVILISKLILSIIIFIIFI). At 249–352 (RPRFLSSKRK…FPQKYKHKYI (104 aa)) the chain is on the cytoplasmic side.

Belongs to the KCH1 low affinity K(+) transporter family.

Its subcellular location is the cell membrane. The protein resides in the bud tip. It is found in the vacuole lumen. It catalyses the reaction K(+)(in) = K(+)(out). In terms of biological role, low affinity potassium transporter that, with KCH1, participates in high-affinity Ca(2+) influx system (HACS) activation during the response to mating pheromone. Directly promotes K(+) influx and HACS may electrochemically respond to this K(+) influx. KCH1 and PRM6/KCH2 act at the apex of the calcium signaling pathway that is used for survival during prolonged exposures to mating pheromones. This Saccharomyces cerevisiae (strain ATCC 204508 / S288c) (Baker's yeast) protein is Pheromone-regulated membrane protein 6.